We begin with the raw amino-acid sequence, 750 residues long: Alpha-galactosidase C (750 aa).

An N-terminal signal peptide occupies residues 1–26 (MFRSTATVAAATAMGLLTATGHGSLA). N-linked (GlcNAc...) asparagine glycosylation is found at asparagine 58, asparagine 162, asparagine 186, asparagine 194, asparagine 366, asparagine 428, asparagine 432, and asparagine 453. The active-site Nucleophile is aspartate 511. Aspartate 573 serves as the catalytic Proton donor.

Belongs to the glycosyl hydrolase 36 family. In terms of assembly, homotetramer. Mg(2+) serves as cofactor. NAD(+) is required as a cofactor.

The protein resides in the secreted. It catalyses the reaction Hydrolysis of terminal, non-reducing alpha-D-galactose residues in alpha-D-galactosides, including galactose oligosaccharides, galactomannans and galactolipids.. Its function is as follows. Hydrolyzes a variety of simple alpha-D-galactoside as well as more complex molecules such as oligosaccharides and polysaccharides. Active on paranitrophenyl-alpha-galactoside, raffinose, locust bean gum and gum guar. The chain is Alpha-galactosidase C (aglC) from Emericella nidulans (strain FGSC A4 / ATCC 38163 / CBS 112.46 / NRRL 194 / M139) (Aspergillus nidulans).